The sequence spans 141 residues: Small ribosomal subunit protein bS16 (141 aa).

Composition is skewed to polar residues over residues 89–101 (NVSV…TEAI) and 109–129 (ATAN…TATI). The segment at 89-141 (NVSVSHAESTEAITNAEPIQATANTESNEVSDSESTATATIRESEEQPPISES) is disordered.

It belongs to the bacterial ribosomal protein bS16 family.

The protein is Small ribosomal subunit protein bS16 of Trichodesmium erythraeum (strain IMS101).